A 110-amino-acid chain; its full sequence is V-type proton ATPase subunit F (110 aa).

It belongs to the V-ATPase F subunit family. V-ATPase is a heteromultimeric enzyme made up of two complexes: the ATP-hydrolytic V1 complex and the proton translocation V0 complex. The V1 complex consists of three catalytic AB heterodimers that form a heterohexamer, three peripheral stalks each consisting of EG heterodimers, one central rotor including subunits D and F, and the regulatory subunits C and H. The proton translocation complex V0 consists of the proton transport subunit a, a ring of proteolipid subunits c9c'', rotary subunit d, subunits e and f, and two accessory subunits.

Its function is as follows. Subunit of the V1 complex of vacuolar(H+)-ATPase (V-ATPase), a multisubunit enzyme composed of a peripheral complex (V1) that hydrolyzes ATP and a membrane integral complex (V0) that translocates protons. V-ATPase is responsible for acidifying and maintaining the pH of intracellular compartments and in some cell types, is targeted to the plasma membrane, where it is responsible for acidifying the extracellular environment. The chain is V-type proton ATPase subunit F (atp6s14) from Xenopus laevis (African clawed frog).